The primary structure comprises 419 residues: L-rhamnose isomerase (419 aa).

Residues histidine 262, aspartate 294, and aspartate 296 each coordinate Mn(2+).

This sequence belongs to the rhamnose isomerase family. As to quaternary structure, homotetramer. Mn(2+) is required as a cofactor.

It is found in the cytoplasm. It carries out the reaction L-rhamnopyranose = L-rhamnulose. Its pathway is carbohydrate degradation; L-rhamnose degradation; glycerone phosphate from L-rhamnose: step 1/3. Catalyzes the interconversion of L-rhamnose and L-rhamnulose. In Salmonella newport (strain SL254), this protein is L-rhamnose isomerase.